The chain runs to 418 residues: Actin-related protein 3B (418 aa).

Belongs to the actin family. ARP3 subfamily. In terms of assembly, interacts with the Arp2/3 complex composed of ARP2, ARP3, ARPC1B, ARPC1B/p41-ARC, ARPC2/p34-ARC, ARPC3/p21-ARC, ARPC4/p20-ARC and ARPC5/p16-ARC.

Its subcellular location is the cytoplasm. It localises to the cytoskeleton. The protein localises to the cell projection. Functionally, plays a role in the organization of the actin cytoskeleton. May function as ATP-binding component of the Arp2/3 complex which is involved in regulation of actin polymerization and together with an activating nucleation-promoting factor (NPF) mediates the formation of branched actin networks. May decrease the metastatic potential of tumors. The sequence is that of Actin-related protein 3B (Actr3b) from Mus musculus (Mouse).